We begin with the raw amino-acid sequence, 550 residues long: Chaperonin GroEL (550 aa).

Residues 30-33 (TLGP), Lys51, 87-91 (DGTTT), Gly415, 479-481 (NAA), and Asp495 each bind ATP. Positions 526-550 (KDEKSDLGNSSAPSAGGMGGMGGMM) are disordered. Gly residues predominate over residues 541-550 (GGMGGMGGMM).

The protein belongs to the chaperonin (HSP60) family. As to quaternary structure, forms a cylinder of 14 subunits composed of two heptameric rings stacked back-to-back. Interacts with the co-chaperonin GroES.

Its subcellular location is the cytoplasm. The enzyme catalyses ATP + H2O + a folded polypeptide = ADP + phosphate + an unfolded polypeptide.. In terms of biological role, together with its co-chaperonin GroES, plays an essential role in assisting protein folding. The GroEL-GroES system forms a nano-cage that allows encapsulation of the non-native substrate proteins and provides a physical environment optimized to promote and accelerate protein folding. The polypeptide is Chaperonin GroEL (Buchnera aphidicola subsp. Baizongia pistaciae (strain Bp)).